We begin with the raw amino-acid sequence, 246 residues long: MAVRAQFENSNEVGVFATLTNSYALTAIGASENFYSVFEAELQDVIPICRTTIAGSRIIGRMTAGNRKGLLVPTNTTDQELQHLRNSLPDAIRIQRIEERLSALGNVIVTNDHIALVHPDIERETEEIIADVLGVEVFRQTIADNVLVGSYMSLSNQGGLVHPKTSIQDQDELSSLLQVPLVAGSVNRGSNVVGAGMVVNDWMAVTGLDTTATELSVIESVFRLGEGLGPSNINTGMKDTMVESFY.

2 positions are modified to phosphoserine; by CK1: serine 174 and serine 175.

Belongs to the eIF-6 family. As to quaternary structure, monomer. Associates with the 60S ribosomal subunit. Post-translationally, phosphorylation at Ser-174 and Ser-175 promotes nuclear export.

It localises to the cytoplasm. The protein resides in the nucleus. It is found in the nucleolus. Binds to the 60S ribosomal subunit and prevents its association with the 40S ribosomal subunit to form the 80S initiation complex in the cytoplasm. Is also involved in ribosome biogenesis. Associates with pre-60S subunits in the nucleus and is involved in its nuclear export. The protein is Eukaryotic translation initiation factor 6 of Verticillium alfalfae (strain VaMs.102 / ATCC MYA-4576 / FGSC 10136) (Verticillium wilt of alfalfa).